The chain runs to 413 residues: uncharacterized protein (413 aa).

Residues 14–34 traverse the membrane as a helical segment; it reads LLFFTVVIIPIFYYIYKIVYL. N-linked (GlcNAc...) asparagine; by host glycosylation is found at Asn46, Asn55, Asn103, Asn171, Asn179, Asn184, Asn220, Asn252, Asn260, Asn273, Asn362, Asn366, Asn374, Asn378, Asn393, and Asn408. A compositionally biased stretch (low complexity) spans 250–263; sequence TKNSTETNSDNNSE. The disordered stretch occupies residues 250–277; the sequence is TKNSTETNSDNNSEIVSETNSETNYSTP. Residues 264 to 277 are compositionally biased toward polar residues; that stretch reads IVSETNSETNYSTP.

It localises to the membrane. This is an uncharacterized protein from Acanthamoeba polyphaga (Amoeba).